The primary structure comprises 500 residues: Ent-cassadiene C11-alpha-hydroxylase 1 (500 aa).

The helical transmembrane segment at 4–24 (SQVWLLWGALSVAVLFYLSTL) threads the bilayer. Cys442 serves as a coordination point for heme.

It belongs to the cytochrome P450 family. The cofactor is heme.

The protein localises to the membrane. It carries out the reaction ent-cassa-12,15-diene + reduced [NADPH--hemoprotein reductase] + O2 = ent-11beta-hydroxycassa-12,15-diene + oxidized [NADPH--hemoprotein reductase] + H2O + H(+). Functionally, enzyme of the diterpenoid metabolism involved in the biosynthesis of antibacterial oryzalides such as phytocassane. Can use ent-cassadiene as substrate, but not C11-alpha-hydroxy-ent-cassadiene, ent-pimaradiene, ent-sandaracopimaradiene, ent-kaurene, ent-isokaurene, syn-pimaradiene, syn-stemarene, syn-stemodene. In Oryza sativa subsp. japonica (Rice), this protein is Ent-cassadiene C11-alpha-hydroxylase 1.